The primary structure comprises 623 residues: Chaperone protein DnaK (623 aa).

Thr-197 is modified (phosphothreonine; by autocatalysis). The segment covering 595–615 (AENMYKKDEPNTANDKKKKDD) has biased composition (basic and acidic residues). The segment at 595 to 623 (AENMYKKDEPNTANDKKKKDDDVIDAEVE) is disordered.

The protein belongs to the heat shock protein 70 family.

Its function is as follows. Acts as a chaperone. The protein is Chaperone protein DnaK of Campylobacter jejuni subsp. jejuni serotype O:6 (strain 81116 / NCTC 11828).